A 148-amino-acid chain; its full sequence is Lysozyme-like protein 1 (148 aa).

An N-terminal signal peptide occupies residues 1–19; the sequence is MKSVGVFALIISFSIVAES. The C-type lysozyme domain occupies 20–148; it reads KIYTRCKLAK…SEWKRGCEVS (129 aa). Intrachain disulfides connect Cys25-Cys145, Cys49-Cys133, Cys83-Cys98, and Cys94-Cys112. Glu54 is a catalytic residue. Residue Asn58 is glycosylated (N-linked (GlcNAc...) asparagine). The active site involves Asp71.

This sequence belongs to the glycosyl hydrolase 22 family. Monomer.

The protein resides in the secreted. It catalyses the reaction Hydrolysis of (1-&gt;4)-beta-linkages between N-acetylmuramic acid and N-acetyl-D-glucosamine residues in a peptidoglycan and between N-acetyl-D-glucosamine residues in chitodextrins.. The chain is Lysozyme-like protein 1 (Lyzl1) from Mus musculus (Mouse).